Reading from the N-terminus, the 695-residue chain is Spermidine/spermine N(1)-acetyltransferase-like protein 1 (695 aa).

Composition is skewed to polar residues over residues 1–39 (MNQS…QGSA), 52–68 (PSMS…NLPD), and 78–98 (DTWQ…SQLV). Disordered regions lie at residues 1–274 (MNQS…MNQM), 290–332 (DMKQ…PGMW), 344–375 (ASIS…NQSG), and 387–493 (RQSG…GLSQ). Over residues 105 to 122 (SQPDPSQPGPSQSGPSQS) the composition is skewed to low complexity. Composition is skewed to polar residues over residues 123–179 (RMRQ…TGLS), 197–208 (GVQQPGISQQVP), 231–266 (PDTS…QPSP), 294–310 (PSMS…NLPD), 355–375 (APSQ…NQSG), 389–422 (SGGS…TGLS), and 459–471 (PGTS…QTGM). The N-acetyltransferase domain occupies 529 to 695 (FQIRHAEAGD…EELLDMAWEE (167 aa)). Residue 552-553 (CE) participates in substrate binding. Acetyl-CoA is bound by residues 618–620 (FYV) and 626–631 (GLGIGA). Substrate-binding positions include 650–652 (HFL) and Glu-676.

This sequence belongs to the acetyltransferase family.

The chain is Spermidine/spermine N(1)-acetyltransferase-like protein 1 (SATL1) from Homo sapiens (Human).